Reading from the N-terminus, the 437-residue chain is Eukaryotic peptide chain release factor subunit 1 (437 aa).

Residue Ala2 is modified to N-acetylalanine. Residues 61–64 (NIKS) carry the NIKS motif; plays an important role in translational termination motif. Lys63 bears the 4-hydroxylysine mark. Lys87 participates in a covalent cross-link: Glycyl lysine isopeptide (Lys-Gly) (interchain with G-Cter in SUMO2). An N5-methylglutamine modification is found at Gln185. The residue at position 347 (Thr347) is a Phosphothreonine. Lys404 participates in a covalent cross-link: Glycyl lysine isopeptide (Lys-Gly) (interchain with G-Cter in SUMO2).

The protein belongs to the eukaryotic release factor 1 family. In terms of assembly, component of the eRF1-eRF3-GTP ternary complex, composed of ETF1/ERF1 and eRF3 (GSPT1/ERF3A or GSPT2/ERF3B) and GTP. Component of the transient SURF (SMG1-UPF1-eRF1-eRF3) complex. Interacts with JMJD4. The ETF1-GSPT1 complex interacts with JMJD4. Post-translationally, hydroxylation at Lys-63 by JMJD4 promotes its translational termination efficiency. Methylated at Gln-185 by N6AMT1. In terms of processing, ubiquitinated via 'Lys-6'-linked polyubiquitin chains by RNF14 and RNF25 in response to ribosome collisions (ribosome stalling), leading to its degradation by the proteasome and rescue of stalled ribosomes.

The protein resides in the cytoplasm. Its function is as follows. Component of the eRF1-eRF3-GTP ternary complex, a ternary complex that mediates translation termination in response to the termination codons. The eRF1-eRF3-GTP complex binds to a stop codon in the ribosomal A-site. ETF1/ERF1 is responsible for stop codon recognition and inducing hydrolysis of peptidyl-tRNA. Following GTP hydrolysis, eRF3 (GSPT1/ERF3A or GSPT2/ERF3B) dissociates, permitting ETF1/eRF1 to accommodate fully in the A-site, followed by hydrolysis of peptidyl-tRNA. Component of the transient SURF complex which recruits UPF1 to stalled ribosomes in the context of nonsense-mediated decay (NMD) of mRNAs containing premature stop codons. Required for SHFL-mediated translation termination which inhibits programmed ribosomal frameshifting (-1PRF) of mRNA from viruses and cellular genes. This Pongo abelii (Sumatran orangutan) protein is Eukaryotic peptide chain release factor subunit 1 (ETF1).